A 346-amino-acid polypeptide reads, in one-letter code: MQASMLDSQWRLTIFSPRRKVKVSQMNSRFIAVLLTATILPWVAQAQDSYPSSPVTIMVPAAAGGPSDTVARLVAQSMSKTLGQQVLVENMGGAGGSLGAANVAKADPDGYRLLLYHIGVATFAALYPNLAYKPIEDFSSVGLITEVPMTIVGRKDLEPKTFADLVAIVKKNATTVTFGTAGTGAVSDLCGRLLQDALGTKITLVPYKGMGPAMTDLIGGRIDLACDQTTNTTTQIKANEVHAYAVTTKARIDVLPDVPTVDEGGLKDFELSAWHALWAPKDTPAPIREKLSEALKTALKDPMVIERFASLGTVPVAQDMATPAALDQKFKAEVERLAKVISEAGK.

Positions 1-46 (MQASMLDSQWRLTIFSPRRKVKVSQMNSRFIAVLLTATILPWVAQA) are cleaved as a signal peptide.

The protein belongs to the UPF0065 (bug) family.

The protein resides in the periplasm. The polypeptide is UPF0065 protein in the TAR-I ttuE-ttuC' intergenic region (Agrobacterium vitis (Rhizobium vitis)).